Here is a 503-residue protein sequence, read N- to C-terminus: Maturase K (503 aa).

This sequence belongs to the intron maturase 2 family. MatK subfamily.

It localises to the plastid. Its subcellular location is the chloroplast. In terms of biological role, usually encoded in the trnK tRNA gene intron. Probably assists in splicing its own and other chloroplast group II introns. The sequence is that of Maturase K from Backhousia myrtifolia (Grey myrtle).